The chain runs to 260 residues: Hemin import ATP-binding protein HmuV (260 aa).

Residues 6–242 (LHADNLHYRA…VQLRACYQAD (237 aa)) enclose the ABC transporter domain. 38–45 (GPNGAGKS) contributes to the ATP binding site.

This sequence belongs to the ABC transporter superfamily. Heme (hemin) importer (TC 3.A.1.14.5) family. As to quaternary structure, the complex is composed of two ATP-binding proteins (HmuV), two transmembrane proteins (HmuU) and a solute-binding protein (HmuT).

Its subcellular location is the cell inner membrane. Functionally, part of the ABC transporter complex HmuTUV involved in hemin import. Responsible for energy coupling to the transport system. This Sodalis glossinidius (strain morsitans) protein is Hemin import ATP-binding protein HmuV.